A 379-amino-acid polypeptide reads, in one-letter code: Histidinol-phosphate aminotransferase (379 aa).

Lysine 236 carries the post-translational modification N6-(pyridoxal phosphate)lysine.

It belongs to the class-II pyridoxal-phosphate-dependent aminotransferase family. Histidinol-phosphate aminotransferase subfamily. Homodimer. Requires pyridoxal 5'-phosphate as cofactor.

The catalysed reaction is L-histidinol phosphate + 2-oxoglutarate = 3-(imidazol-4-yl)-2-oxopropyl phosphate + L-glutamate. Its pathway is amino-acid biosynthesis; L-histidine biosynthesis; L-histidine from 5-phospho-alpha-D-ribose 1-diphosphate: step 7/9. The protein is Histidinol-phosphate aminotransferase of Desulfotalea psychrophila (strain LSv54 / DSM 12343).